Reading from the N-terminus, the 241-residue chain is Large ribosomal subunit protein uL1 (241 aa).

It belongs to the universal ribosomal protein uL1 family. As to quaternary structure, part of the 50S ribosomal subunit.

In terms of biological role, binds directly to 23S rRNA. The L1 stalk is quite mobile in the ribosome, and is involved in E site tRNA release. Functionally, protein L1 is also a translational repressor protein, it controls the translation of the L11 operon by binding to its mRNA. This Streptomyces coelicolor (strain ATCC BAA-471 / A3(2) / M145) protein is Large ribosomal subunit protein uL1.